The sequence spans 445 residues: Glucose-6-phosphate isomerase (445 aa).

The active-site Proton donor is the Glu-287. Residues His-308 and Lys-422 contribute to the active site.

The protein belongs to the GPI family.

It is found in the cytoplasm. It catalyses the reaction alpha-D-glucose 6-phosphate = beta-D-fructose 6-phosphate. The protein operates within carbohydrate biosynthesis; gluconeogenesis. It functions in the pathway carbohydrate degradation; glycolysis; D-glyceraldehyde 3-phosphate and glycerone phosphate from D-glucose: step 2/4. In terms of biological role, catalyzes the reversible isomerization of glucose-6-phosphate to fructose-6-phosphate. The sequence is that of Glucose-6-phosphate isomerase from Bacteroides fragilis (strain ATCC 25285 / DSM 2151 / CCUG 4856 / JCM 11019 / LMG 10263 / NCTC 9343 / Onslow / VPI 2553 / EN-2).